The chain runs to 376 residues: Fibromodulin (376 aa).

The N-terminal stretch at Met-1–Ala-18 is a signal peptide. Pyrrolidone carboxylic acid is present on Gln-19. Tyr-20, Tyr-38, Tyr-45, Tyr-47, Tyr-50, Tyr-53, Tyr-55, Tyr-63, and Tyr-65 each carry sulfotyrosine. The LRRNT domain occupies Ser-67–Ser-105. LRR repeat units lie at residues Arg-106 to Asn-127, Gly-130 to Phe-151, His-156 to Arg-176, Ser-177 to Gly-198, Asn-201 to Leu-222, Ser-224 to Ala-245, Leu-246 to Gly-266, and Lys-269 to Thr-289. Asn-127 carries an N-linked (GlcNAc...) (keratan sulfate) asparagine glycan. Asn-166 is a glycosylation site (N-linked (GlcNAc...) (keratan sulfate) asparagine). N-linked (GlcNAc...) (keratan sulfate) asparagine glycosylation is present at Asn-201. Asn-291 carries N-linked (GlcNAc...) (keratan sulfate) asparagine glycosylation. LRR repeat units lie at residues Ser-294 to Leu-315 and Glu-316 to Thr-335. Cys-334 and Cys-367 form a disulfide bridge. Residue Asn-341 is glycosylated (N-linked (GlcNAc...) asparagine). The stretch at Lys-344 to Pro-365 is one LRR 11 repeat.

Belongs to the small leucine-rich proteoglycan (SLRP) family. SLRP class II subfamily. Binds to type I and type II collagen. Binds keratan sulfate chains.

It localises to the secreted. Its subcellular location is the extracellular space. It is found in the extracellular matrix. Functionally, affects the rate of fibrils formation. May have a primary role in collagen fibrillogenesis. This is Fibromodulin (FMOD) from Bos taurus (Bovine).